The following is a 163-amino-acid chain: uncharacterized protein (163 aa).

Residues 11 to 31 (LSWFLLLVVVILIFFLLLSCL) form a helical membrane-spanning segment.

It is found in the membrane. This is an uncharacterized protein from Saccharomyces cerevisiae (strain ATCC 204508 / S288c) (Baker's yeast).